A 270-amino-acid polypeptide reads, in one-letter code: Shikimate dehydrogenase (NADP(+)) (270 aa).

Residues 15-17 and threonine 62 contribute to the shikimate site; that span reads SLS. Residue lysine 66 is the Proton acceptor of the active site. Asparagine 87 and aspartate 102 together coordinate shikimate. NADP(+) is bound by residues 126–130, 149–154, and isoleucine 210; these read GAGGS and NRTVGR. Tyrosine 212 is a shikimate binding site. Glycine 233 contacts NADP(+).

The protein belongs to the shikimate dehydrogenase family. As to quaternary structure, homodimer.

It carries out the reaction shikimate + NADP(+) = 3-dehydroshikimate + NADPH + H(+). The protein operates within metabolic intermediate biosynthesis; chorismate biosynthesis; chorismate from D-erythrose 4-phosphate and phosphoenolpyruvate: step 4/7. Its function is as follows. Involved in the biosynthesis of the chorismate, which leads to the biosynthesis of aromatic amino acids. Catalyzes the reversible NADPH linked reduction of 3-dehydroshikimate (DHSA) to yield shikimate (SA). The protein is Shikimate dehydrogenase (NADP(+)) of Hyphomonas neptunium (strain ATCC 15444).